The chain runs to 274 residues: NH(3)-dependent NAD(+) synthetase (274 aa).

An ATP-binding site is contributed by 46–53; it reads GISGGQDS. A Mg(2+)-binding site is contributed by aspartate 52. Arginine 140 provides a ligand contact to deamido-NAD(+). Residue threonine 160 coordinates ATP. Glutamate 165 provides a ligand contact to Mg(2+). 2 residues coordinate deamido-NAD(+): lysine 173 and aspartate 180. Positions 189 and 211 each coordinate ATP. Position 260 to 261 (260 to 261) interacts with deamido-NAD(+); it reads HK.

This sequence belongs to the NAD synthetase family. As to quaternary structure, homodimer.

It carries out the reaction deamido-NAD(+) + NH4(+) + ATP = AMP + diphosphate + NAD(+) + H(+). The protein operates within cofactor biosynthesis; NAD(+) biosynthesis; NAD(+) from deamido-NAD(+) (ammonia route): step 1/1. Its function is as follows. Catalyzes the ATP-dependent amidation of deamido-NAD to form NAD. Uses ammonia as a nitrogen source. The protein is NH(3)-dependent NAD(+) synthetase of Lactococcus lactis subsp. cremoris (strain MG1363).